Reading from the N-terminus, the 66-residue chain is Toxin Tppa2 (66 aa).

The LCN-type CS-alpha/beta domain maps to 1–63 (KDGYLVGNDG…TWSRATNKCG (63 aa)). Intrachain disulfides connect C11/C62, C15/C37, C23/C43, and C27/C45. C62 bears the Cysteine amide mark.

It belongs to the long (4 C-C) scorpion toxin superfamily. Sodium channel inhibitor family. Beta subfamily. As to expression, expressed by the venom gland.

Its subcellular location is the secreted. Functionally, beta toxins bind voltage-independently at site-4 of sodium channels (Nav) and shift the voltage of activation toward more negative potentials thereby affecting sodium channel activation and promoting spontaneous and repetitive firing. In Tityus pachyurus (Colombian scorpion), this protein is Toxin Tppa2.